The primary structure comprises 553 residues: MKKYLGIIVDAVSRRQFKGEITVENGKILRVEEKEHDHERYILPGLVDAHVHIESSMTVPSVFARMAVAKGTVAVVSDPHEIANVMGEEGIDFMLGDSKRSPLKVFFGVPSCVPATPFESAGSVLDAEAVDRLLAREDLYYLSEMMNFPGVVLGFPDVMAKLESAKKCGKVIDGHAPGLRGADLETYIGVGISTDHESFTYEEAVEKIKLGMKILIREGSSARNFETLYSLIDEYPEAVMLCTDDSHPDTLIYEGHIDKLIRRGQEKGLDIFNLIRAAVINPVEHYGLNVGLLREGDPADFITVDDLKSFNVLSTFIDGECVYENGKVLFPMKKVPAKNVFNRNKISIDAAKLAVPAEETGDRKEGMRKIRVIVARDGELVTGQELAFPKVENGNMVSDPEKDILKMVVLSRYADDPVQIGFIKNIGLKEGAIASSIAHDSHNIIAVGATDKDIVEAVNRLVENKGGIVVGTAENLLDLPLEVAGLMSTLDGVEVASRYRLLNEEARKLGTSLESPFMTLAFMSLLVIPELKLGDKGLFDVTKFEFVELFAEE.

Belongs to the metallo-dependent hydrolases superfamily. Adenine deaminase family. Mn(2+) serves as cofactor.

The catalysed reaction is adenine + H2O + H(+) = hypoxanthine + NH4(+). The chain is Adenine deaminase from Methanosarcina acetivorans (strain ATCC 35395 / DSM 2834 / JCM 12185 / C2A).